Consider the following 289-residue polypeptide: Protease HtpX (289 aa).

2 helical membrane-spanning segments follow: residues 6 to 26 and 38 to 58; these read ILFL…LNII and TGIL…SLFM. Histidine 144 lines the Zn(2+) pocket. Residue glutamate 145 is part of the active site. Histidine 148 contributes to the Zn(2+) binding site. 2 helical membrane-spanning segments follow: residues 152-172 and 194-214; these read GDMV…IFLS and LVFW…ATMI. Glutamate 223 is a Zn(2+) binding site.

The protein belongs to the peptidase M48B family. The cofactor is Zn(2+).

The protein resides in the cell inner membrane. The chain is Protease HtpX from Haemophilus ducreyi (strain 35000HP / ATCC 700724).